Reading from the N-terminus, the 135-residue chain is Histone H2A.4 (135 aa).

The protein belongs to the histone H2A family. In terms of assembly, the nucleosome is a histone octamer containing two molecules each of H2A, H2B, H3 and H4 assembled in one H3-H4 heterotetramer and two H2A-H2B heterodimers. The octamer wraps approximately 147 bp of DNA. As to expression, expressed preferentially in meristematic tissues of young seedlings, in stigma and ovary but not in pollen.

Its subcellular location is the nucleus. The protein resides in the chromosome. In terms of biological role, core component of nucleosome. Nucleosomes wrap and compact DNA into chromatin, limiting DNA accessibility to the cellular machineries which require DNA as a template. Histones thereby play a central role in transcription regulation, DNA repair, DNA replication and chromosomal stability. DNA accessibility is regulated via a complex set of post-translational modifications of histones, also called histone code, and nucleosome remodeling. The protein is Histone H2A.4 (TH254) of Triticum aestivum (Wheat).